The primary structure comprises 77 residues: Putative defensin-like protein 162 (77 aa).

The N-terminal stretch at M1–G27 is a signal peptide. 4 cysteine pairs are disulfide-bonded: C34/C77, C44/C63, C49/C71, and C53/C73.

Belongs to the DEFL family.

Its subcellular location is the secreted. The protein is Putative defensin-like protein 162 (LCR37) of Arabidopsis thaliana (Mouse-ear cress).